The sequence spans 120 residues: U-scoloptoxin(20)-Cw1a (120 aa).

The signal sequence occupies residues 1–26 (MNSTDRLLGVLLAVVALILLIRISEA). The segment at 87–106 (SSGKSLTTTKDSSESRKKEI) is disordered. Positions 97–106 (DSSESRKKEI) are enriched in basic and acidic residues.

It belongs to the scoloptoxin-20 family. In terms of processing, contains 3 disulfide bonds. In terms of tissue distribution, expressed by the venom gland.

The protein localises to the secreted. This chain is U-scoloptoxin(20)-Cw1a, found in Cormocephalus westwoodi (Westwood's green centipede).